A 112-amino-acid chain; its full sequence is MTGKTVTRADLAESVFRKVGLSRTESAELVETVIDEICNAIVRGETVKLSSFATFQVRDKNERIGRNPKTGEEVPISPRRVMTFKASNVLKTRILKSHVARKIKLKPLNPAP.

Belongs to the bacterial histone-like protein family. In terms of assembly, heterodimer of an alpha and a beta chain.

This protein is one of the two subunits of integration host factor, a specific DNA-binding protein that functions in genetic recombination as well as in transcriptional and translational control. The protein is Integration host factor subunit alpha of Rhizobium johnstonii (strain DSM 114642 / LMG 32736 / 3841) (Rhizobium leguminosarum bv. viciae).